Here is a 159-residue protein sequence, read N- to C-terminus: Ribosomal RNA large subunit methyltransferase H (159 aa).

Residues leucine 76, glycine 108, and 127–132 (LSKMTF) contribute to the S-adenosyl-L-methionine site.

The protein belongs to the RNA methyltransferase RlmH family. Homodimer.

It is found in the cytoplasm. It catalyses the reaction pseudouridine(1915) in 23S rRNA + S-adenosyl-L-methionine = N(3)-methylpseudouridine(1915) in 23S rRNA + S-adenosyl-L-homocysteine + H(+). Specifically methylates the pseudouridine at position 1915 (m3Psi1915) in 23S rRNA. This Ureaplasma urealyticum serovar 10 (strain ATCC 33699 / Western) protein is Ribosomal RNA large subunit methyltransferase H.